The following is a 320-amino-acid chain: Ferrochelatase (320 aa).

Positions 194 and 275 each coordinate Fe cation.

Belongs to the ferrochelatase family.

Its subcellular location is the cytoplasm. The catalysed reaction is heme b + 2 H(+) = protoporphyrin IX + Fe(2+). It functions in the pathway porphyrin-containing compound metabolism; protoheme biosynthesis; protoheme from protoporphyrin-IX: step 1/1. Its function is as follows. Catalyzes the ferrous insertion into protoporphyrin IX. In Pectobacterium atrosepticum (strain SCRI 1043 / ATCC BAA-672) (Erwinia carotovora subsp. atroseptica), this protein is Ferrochelatase.